Reading from the N-terminus, the 264-residue chain is Inner membrane ABC transporter permease protein YdcV (264 aa).

Residues 1–12 (MHSERAPFFLKL) lie on the Cytoplasmic side of the membrane. A helical membrane pass occupies residues 13 to 33 (AAWGGVVFLHFPILIIAAYAF). Residues 34–70 (NTEDAAFSFPPQGLTLRWFSVAAQRSDILDAVTLSLK) are Periplasmic-facing. The ABC transmembrane type-1 domain maps to 65–252 (VTLSLKVAAL…MLVTTLPILG (188 aa)). Residues 71–91 (VAALATLIALVLGTLAAAALW) traverse the membrane as a helical segment. Residues 92-100 (RRDFFGKNA) are Cytoplasmic-facing. A helical membrane pass occupies residues 101 to 121 (ISLLLLLPIALPGIVTGLALL). The Periplasmic portion of the chain corresponds to 122 to 128 (TAFKTIN). Residues 129–149 (LEPGFFTIVVGHATFCVVVVF) traverse the membrane as a helical segment. Residues 150–189 (NNVIARFRRTSWSLVEASMDLGANGWQTFRYVVLPNLSSA) lie on the Cytoplasmic side of the membrane. The helical transmembrane segment at 190-210 (LLAGGMLAFALSFDEIIVTTF) threads the bilayer. Residues 211–236 (TAGHERTLPLWLLNQLGRPRDVPVTN) lie on the Periplasmic side of the membrane. Residues 237-257 (VVALLVMLVTTLPILGAWWLT) form a helical membrane-spanning segment. Over 258–264 (REGDNGQ) the chain is Cytoplasmic.

It belongs to the binding-protein-dependent transport system permease family. CysTW subfamily.

It localises to the cell inner membrane. Its function is as follows. Probably part of the ABC transporter complex YdcSTUV. Probably responsible for the translocation of the substrate across the membrane. The chain is Inner membrane ABC transporter permease protein YdcV (ydcV) from Shigella flexneri.